The following is a 355-amino-acid chain: Zinc finger protein CONSTANS-LIKE 5 (355 aa).

8 residues coordinate Zn(2+): Cys22, Cys25, Cys45, His50, Cys61, Cys64, Cys84, and His89. The segment at 22 to 60 (CDACKSVTAAVFCRVDSAFLCIACDTRIHSFTRHERVWV) adopts a B box-type 1; atypical zinc-finger fold. Residues 61–103 (CEVCEQAPAAVTCKADAAALCVSCDADIHSANPLASRHERVPV) form a B box-type 2; atypical zinc finger. The 43-residue stretch at 285 to 327 (REARVLRYREKRKNRKFEKTIRYASRKAYAESRPRIKGRFAKR) folds into the CCT domain.

This sequence belongs to the CONSTANS family.

The protein resides in the nucleus. The sequence is that of Zinc finger protein CONSTANS-LIKE 5 (COL5) from Arabidopsis thaliana (Mouse-ear cress).